The primary structure comprises 561 residues: MACPF domain-containing protein CAD1 (561 aa).

The region spanning 11–314 (VPSSEALTTT…PPIEDLQYFL (304 aa)) is the MACPF domain. The interval 489–514 (VASSGRLEPGGPSTSSSTEEVSGQSG) is disordered. Over residues 500–513 (PSTSSSTEEVSGQS) the composition is skewed to polar residues.

It belongs to the complement C6/C7/C8/C9 (TC 1.C.39) family. In terms of tissue distribution, mainly expressed in the vascular system.

Its function is as follows. Negatively controls the salicylic acid (SA)-mediated pathway of programmed cell death in plant immunity. The sequence is that of MACPF domain-containing protein CAD1 (CAD1) from Arabidopsis thaliana (Mouse-ear cress).